The chain runs to 257 residues: tRNA (guanine-N(1)-)-methyltransferase (257 aa).

Residues glycine 113 and 133–138 (IGDYVL) each bind S-adenosyl-L-methionine.

The protein belongs to the RNA methyltransferase TrmD family. In terms of assembly, homodimer.

Its subcellular location is the cytoplasm. It carries out the reaction guanosine(37) in tRNA + S-adenosyl-L-methionine = N(1)-methylguanosine(37) in tRNA + S-adenosyl-L-homocysteine + H(+). Specifically methylates guanosine-37 in various tRNAs. The chain is tRNA (guanine-N(1)-)-methyltransferase from Cronobacter sakazakii (strain ATCC BAA-894) (Enterobacter sakazakii).